Here is a 340-residue protein sequence, read N- to C-terminus: Glycerol-3-phosphate dehydrogenase [NAD(P)+] (340 aa).

NADPH contacts are provided by W11, R33, and K110. Residues K110, G144, and S146 each contribute to the sn-glycerol 3-phosphate site. A148 contributes to the NADPH binding site. The sn-glycerol 3-phosphate site is built by K199, D252, S262, R263, and N264. Residue K199 is the Proton acceptor of the active site. An NADPH-binding site is contributed by R263. NADPH contacts are provided by V287 and E289.

The protein belongs to the NAD-dependent glycerol-3-phosphate dehydrogenase family.

Its subcellular location is the cytoplasm. It carries out the reaction sn-glycerol 3-phosphate + NAD(+) = dihydroxyacetone phosphate + NADH + H(+). It catalyses the reaction sn-glycerol 3-phosphate + NADP(+) = dihydroxyacetone phosphate + NADPH + H(+). It functions in the pathway membrane lipid metabolism; glycerophospholipid metabolism. Functionally, catalyzes the reduction of the glycolytic intermediate dihydroxyacetone phosphate (DHAP) to sn-glycerol 3-phosphate (G3P), the key precursor for phospholipid synthesis. This Polynucleobacter asymbioticus (strain DSM 18221 / CIP 109841 / QLW-P1DMWA-1) (Polynucleobacter necessarius subsp. asymbioticus) protein is Glycerol-3-phosphate dehydrogenase [NAD(P)+].